Here is a 246-residue protein sequence, read N- to C-terminus: Homeobox protein Crxos (246 aa).

DNA-binding regions (homeobox) lie at residues 22–72 and 129–182; these read WEQL…EMRP and ELTD…RGYR. A Nuclear localization signal motif is present at residues 163–177; that stretch reads RKDLIRSWFITQRHR.

This sequence belongs to the paired homeobox family. In terms of tissue distribution, specifically expressed during the preimplantation stages of embryonic development, between the four-cell to eight-cell stage and the morula stage. Expressed in adult testis. As to expression, detected in early embryos; expression decreases gradually with embryonic development. Also expressed in extraembryonic tissues after E14.5, expression level increases drastically until E18.5, immediately before partum.

The protein localises to the nucleus. Functionally, transcription factor that acts as a regulator of embryonic stem cell differentiation during the preimplantation stages of embryonic development. In terms of biological role, transcription factor that acts as a positive regulator of embryonic stem cell differentiation. Transcription factor that promotes embryonic stem cell pluripotency. Its function is as follows. Transcription factor that promotes embryonic stem cell pluripotency. Also involved in extraembryonic tissues development by promoting the expression of placental prolactin family genes. The protein is Homeobox protein Crxos of Mus musculus (Mouse).